The sequence spans 62 residues: Photosystem II reaction center protein Z (62 aa).

2 helical membrane passes run 8-28 (ALFALIATSFLLVVGVPVAFA) and 41-61 (FSGASLWIGLVFLVGIPNSFI).

It belongs to the PsbZ family. In terms of assembly, PSII is composed of 1 copy each of membrane proteins PsbA, PsbB, PsbC, PsbD, PsbE, PsbF, PsbH, PsbI, PsbJ, PsbK, PsbL, PsbM, PsbT, PsbY, PsbZ, Psb30/Ycf12, at least 3 peripheral proteins of the oxygen-evolving complex and a large number of cofactors. It forms dimeric complexes.

It is found in the plastid. The protein localises to the chloroplast thylakoid membrane. Its function is as follows. May control the interaction of photosystem II (PSII) cores with the light-harvesting antenna, regulates electron flow through the 2 photosystem reaction centers. PSII is a light-driven water plastoquinone oxidoreductase, using light energy to abstract electrons from H(2)O, generating a proton gradient subsequently used for ATP formation. The sequence is that of Photosystem II reaction center protein Z from Adiantum capillus-veneris (Maidenhair fern).